Consider the following 379-residue polypeptide: Glucose-1-phosphate adenylyltransferase (379 aa).

Alpha-D-glucose 1-phosphate-binding positions include G164, E179–K180, and S190.

This sequence belongs to the bacterial/plant glucose-1-phosphate adenylyltransferase family. As to quaternary structure, homotetramer.

The catalysed reaction is alpha-D-glucose 1-phosphate + ATP + H(+) = ADP-alpha-D-glucose + diphosphate. The protein operates within glycan biosynthesis; glycogen biosynthesis. Its function is as follows. Involved in the biosynthesis of ADP-glucose, a building block required for the elongation reactions to produce glycogen. Catalyzes the reaction between ATP and alpha-D-glucose 1-phosphate (G1P) to produce pyrophosphate and ADP-Glc. The polypeptide is Glucose-1-phosphate adenylyltransferase (Lactiplantibacillus plantarum (strain ATCC BAA-793 / NCIMB 8826 / WCFS1) (Lactobacillus plantarum)).